A 161-amino-acid chain; its full sequence is 2-C-methyl-D-erythritol 2,4-cyclodiphosphate synthase (161 aa).

Asp-14 and His-16 together coordinate a divalent metal cation. 4-CDP-2-C-methyl-D-erythritol 2-phosphate contacts are provided by residues 14 to 16 and 40 to 41; these read DVH and HS. Residue His-48 coordinates a divalent metal cation. 4-CDP-2-C-methyl-D-erythritol 2-phosphate contacts are provided by residues 62–64, Phe-142, and Arg-145; that span reads DLG.

This sequence belongs to the IspF family. In terms of assembly, homotrimer. Requires a divalent metal cation as cofactor.

It carries out the reaction 4-CDP-2-C-methyl-D-erythritol 2-phosphate = 2-C-methyl-D-erythritol 2,4-cyclic diphosphate + CMP. It functions in the pathway isoprenoid biosynthesis; isopentenyl diphosphate biosynthesis via DXP pathway; isopentenyl diphosphate from 1-deoxy-D-xylulose 5-phosphate: step 4/6. Its function is as follows. Involved in the biosynthesis of isopentenyl diphosphate (IPP) and dimethylallyl diphosphate (DMAPP), two major building blocks of isoprenoid compounds. Catalyzes the conversion of 4-diphosphocytidyl-2-C-methyl-D-erythritol 2-phosphate (CDP-ME2P) to 2-C-methyl-D-erythritol 2,4-cyclodiphosphate (ME-CPP) with a corresponding release of cytidine 5-monophosphate (CMP). This chain is 2-C-methyl-D-erythritol 2,4-cyclodiphosphate synthase, found in Acidothermus cellulolyticus (strain ATCC 43068 / DSM 8971 / 11B).